Here is a 2198-residue protein sequence, read N- to C-terminus: Activating signal cointegrator 1 complex subunit 3 (2198 aa).

Ser12 carries the phosphoserine modification. Coiled-coil stretches lie at residues 18–81 (KQDN…KQIV) and 328–356 (IQSE…KAGE). Residues 487 to 670 (ETAYNTNENM…FLHVNPYIGL (184 aa)) form the Helicase ATP-binding 1 domain. Residue 500–507 (APTGAGKT) participates in ATP binding. Lys573 carries the N6-acetyllysine modification. Residues 612–615 (DEVH) carry the DEVH box motif. The Helicase C-terminal 1 domain maps to 697–915 (QLNNMDEVCY…GTVTNVEEAV (219 aa)). Positions 979–1288 (STDLGRTASH…GAEAVCIINF (310 aa)) constitute an SEC63 1 domain. The Helicase ATP-binding 2 domain occupies 1337–1512 (HTLYHTDCNV…WLNIKQMGLF (176 aa)). 1350–1357 (APTGSGKT) is an ATP binding site. The DEIH box signature appears at 1454 to 1457 (DEIH). The Helicase C-terminal 2 domain maps to 1545 to 1740 (PAFQAIRSHS…VLSDHLNAEI (196 aa)). The SEC63 2 domain occupies 1813–2177 (PLTCGRIASY…LGLDQQYDIY (365 aa)).

This sequence belongs to the helicase family. As to quaternary structure, identified in the ASCC complex that contains ASCC1, ASCC2 and ASCC3. Functions as a scaffolding subunit that interacts directly with both ASCC1 and ASCC2. Interacts directly with ALKBH3, and thereby recruits ALKBH3 to the ASCC complex. Part of the ASC-1/TRIP4 complex, that contains TRIP4, ASCC1, ASCC2 and ASCC3. Part of the RQT (ribosome quality control trigger) complex, that contains ASCC2, ASCC3 and TRIP4. Associates with ribosomes; recruited to collided ribosomes. Interacts with ZCCHC4. Interacts with ZNF598. Interacts with RPS3.

It localises to the nucleus. It is found in the nucleus speckle. Its subcellular location is the cytoplasm. The protein resides in the cytosol. It carries out the reaction Couples ATP hydrolysis with the unwinding of duplex DNA by translocating in the 3'-5' direction.. The catalysed reaction is ATP + H2O = ADP + phosphate + H(+). In terms of biological role, ATPase involved both in DNA repair and rescue of stalled ribosomes. 3'-5' DNA helicase involved in repair of alkylated DNA: promotes DNA unwinding to generate single-stranded substrate needed for ALKBH3, enabling ALKBH3 to process alkylated N3-methylcytosine (3mC) within double-stranded regions. Also involved in activation of the ribosome quality control (RQC) pathway, a pathway that degrades nascent peptide chains during problematic translation. Drives the splitting of stalled ribosomes that are ubiquitinated in a ZNF598-dependent manner, as part of the ribosome quality control trigger (RQT) complex. Part of the ASC-1 complex that enhances NF-kappa-B, SRF and AP1 transactivation. This is Activating signal cointegrator 1 complex subunit 3 (Ascc3) from Mus musculus (Mouse).